The chain runs to 1607 residues: MHPGSISFNMIINKCIPICLFILFIMMMEFTVSKADSKNDIVSESHPSLQKLGCGGSQSPTNGVCGSVDIRSSMDNFKLLENCTVIEGSLRISLFELKALDFRHLSFPDLREITDYLLMYRVYGLETLSKLFPNLAIIRGRELFNSYAIVMYEMRDLQDLGLVNLRTISRGGVRLTKNFKLCYIETINWTQIGVSDPEARRFINNKEQCPNSCKDECQSKRCWTYSDCQKGLNCQCKENTYCMENGSCCHDYCLGGCKVPMNPDECFSCKEVQFNNTCRPQCPPGTYKFLNRRCLTDKECLALTNDPDGNTPKLLDGEKGEPSLCLYTCPQNYSVGDSKDNKNLSQCVKCRQLCPKECHGLEINNIQDAHKLKECSKISGPLKIQIMSGSNVAQELEKSLGNIREVTETIHIKRSYALVTLHFFKNLQIIGSKVPSSETQEGQSFSLFLMDNTNLQELFPEEQMKKMKILNGGIYVHDNGQLCPHTIKEFLSHLNLSEAQSSISSISNGHQRPCEKHDLNVTVEKIAHNAAILAWNKYKADERQLLTYILNYKEIKDESNDINIFQGRDLCSHDLWMTREYAPKEGPEADQIGMLYDLKPFTTYAVYIQAYTVSTATHAAMTNILTFTTYPFHPSEPTDLVAISEDPHELRVSWKPPKYPNGNITHYKIVYHKLELNEKSYEQRNYCRDPLVHQKKKEKVKIEEEGKKINNSANSNCCKCPKSKEEMDTESRKREIEMYFEDYLHKHIYCKRYDKLPDEVDLNFDGMNLPQLVEMNYNSSETSDRIEVFPNYVIENTSDLANLTEIVKEVVVYGTTEVTLPNLEHFSEYSIEVLACQDYNEKVLSKLCSIRAITFERTKDSYAADMINETTVDTEIETNFTGNVFIKWESPTSPNGLILKYLLWYKKANQENLVPQTICITRQEYLKNLGYKLTRLEPGNWTFKISAISLAENSSFTLERFFIVPRPPDPESSNTLLIVAIVLAFFGVLTVSLIVACVYYKQKIRSDDMTVISRNMNYVPSEILYISDEWEVDRDKIKLIKELGQGSFGMVYEGVAKGIRDDPNEEIPVAVKTVNDRASFSDRREFLKEATTMKEFHCHHVVKLLGVVSTGQPALVIMELMALGDLKNYLRGHRPDEDHPGVMPPHLLDILQMAGEIADGMAYLADKKFVHRDLAARNCMVSEERTVKIGDFGMTRDIYETDYYRKGGKGMLPVRWMAPESLKDGVFTSLSDVWSYGVVMWEMVTLAAQPYQGLSNEEVVKFISDGYIMELPENCPNEMAYLMQHCWAKKPNQRPTFKAIIEYLLPKLKPSFEKVSYFFTSGGGHTDGAGEGTLAEPEGSDDSSSINSLSCEGAAAPRQSLTPCGGGQFKSSTHFNGGSHTLYDEGVDRETILNGVDDGDEDEAAGRYSLSEFGEDLDDSSRPFMSDDFIPPVMTRQPLLSHQSNGNDSNVRNSGLIELKPLINKDKRPGLSSPRLNARSNPFSSEYIGHYPPTLTTELETLNGNQSSHNNNSFELMTPDPLKSGPASESSNGVSSSSWRPKPILKLPTLNQARVGDSVGCLCLTLGTRINIVKPIETVRPETNTIRYLKPPHPMLIWSTLKMVLVL.

Positions 1 to 35 are cleaved as a signal peptide; sequence MHPGSISFNMIINKCIPICLFILFIMMMEFTVSKA. N-linked (GlcNAc...) asparagine glycans are attached at residues N82, N188, N245, N275, N332, N343, N495, N520, N663, N710, N778, N796, N802, N868, N879, N940, and N953. 3 consecutive Fibronectin type-III domains span residues 517-632, 636-726, and 756-861; these read HDLN…TYPF, EPTD…SKEE, and LPDE…TKDS. At 698 to 975 the chain is on the extracellular side; it reads EKVKIEEEGK…RPPDPESSNT (278 aa). In terms of domain architecture, Fibronectin type-III 4 spans 870–967; the sequence is TTVDTEIETN…LERFFIVPRP (98 aa). Residues 976–996 form a helical membrane-spanning segment; the sequence is LLIVAIVLAFFGVLTVSLIVA. Residues 997-1607 are Cytoplasmic-facing; that stretch reads CVYYKQKIRS…WSTLKMVLVL (611 aa). The region spanning 1037–1308 is the Protein kinase domain; that stretch reads IKLIKELGQG…AIIEYLLPKL (272 aa). ATP-binding positions include 1043–1051 and K1072; that span reads LGQGSFGMV. Catalysis depends on D1173, which acts as the Proton acceptor. Y1199 carries the phosphotyrosine; by autocatalysis modification. 2 disordered regions span residues 1328–1352 and 1501–1539; these read GAGE…LSCE and TLNG…SSSW. A compositionally biased stretch (polar residues) spans 1503-1515; sequence NGNQSSHNNNSFE. Positions 1524-1538 are enriched in low complexity; it reads SGPASESSNGVSSSS.

The protein belongs to the protein kinase superfamily. Tyr protein kinase family. Insulin receptor subfamily. As to quaternary structure, probable tetramer of 2 alpha and 2 beta chains linked by disulfide bonds. The alpha chains contribute to the formation of the ligand-binding domain, while the beta chains carry the kinase domain. Mn(2+) is required as a cofactor.

The protein resides in the membrane. It catalyses the reaction L-tyrosyl-[protein] + ATP = O-phospho-L-tyrosyl-[protein] + ADP + H(+). In terms of biological role, this receptor probably binds to the four different molluscan insulin-related peptides and has a tyrosine-protein kinase activity. In Lymnaea stagnalis (Great pond snail), this protein is Putative molluscan insulin-related peptide(s) receptor.